A 179-amino-acid polypeptide reads, in one-letter code: Large ribosomal subunit protein uL5 (179 aa).

Belongs to the universal ribosomal protein uL5 family. In terms of assembly, part of the 50S ribosomal subunit; part of the 5S rRNA/L5/L18/L25 subcomplex. Contacts the 5S rRNA and the P site tRNA. Forms a bridge to the 30S subunit in the 70S ribosome.

This is one of the proteins that bind and probably mediate the attachment of the 5S RNA into the large ribosomal subunit, where it forms part of the central protuberance. In the 70S ribosome it contacts protein S13 of the 30S subunit (bridge B1b), connecting the 2 subunits; this bridge is implicated in subunit movement. Contacts the P site tRNA; the 5S rRNA and some of its associated proteins might help stabilize positioning of ribosome-bound tRNAs. The sequence is that of Large ribosomal subunit protein uL5 from Neisseria gonorrhoeae (strain ATCC 700825 / FA 1090).